The chain runs to 906 residues: Protein translocase subunit SecA (906 aa).

Residues glutamine 89, 107-111, and aspartate 502 contribute to the ATP site; that span reads GEGKT. Zn(2+) contacts are provided by cysteine 890, cysteine 892, cysteine 901, and histidine 902.

Belongs to the SecA family. As to quaternary structure, monomer and homodimer. Part of the essential Sec protein translocation apparatus which comprises SecA, SecYEG and auxiliary proteins SecDF-YajC and YidC. It depends on Zn(2+) as a cofactor.

The protein localises to the cell inner membrane. It is found in the cytoplasm. The catalysed reaction is ATP + H2O + cellular proteinSide 1 = ADP + phosphate + cellular proteinSide 2.. In terms of biological role, part of the Sec protein translocase complex. Interacts with the SecYEG preprotein conducting channel. Has a central role in coupling the hydrolysis of ATP to the transfer of proteins into and across the cell membrane, serving both as a receptor for the preprotein-SecB complex and as an ATP-driven molecular motor driving the stepwise translocation of polypeptide chains across the membrane. This Bartonella quintana (strain Toulouse) (Rochalimaea quintana) protein is Protein translocase subunit SecA.